The following is a 290-amino-acid chain: 33 kDa chaperonin (290 aa).

2 disulfides stabilise this stretch: Cys235–Cys237 and Cys268–Cys271.

Belongs to the HSP33 family. Post-translationally, under oxidizing conditions two disulfide bonds are formed involving the reactive cysteines. Under reducing conditions zinc is bound to the reactive cysteines and the protein is inactive.

Its subcellular location is the cytoplasm. Functionally, redox regulated molecular chaperone. Protects both thermally unfolding and oxidatively damaged proteins from irreversible aggregation. Plays an important role in the bacterial defense system toward oxidative stress. This is 33 kDa chaperonin from Streptococcus pyogenes serotype M18 (strain MGAS8232).